Reading from the N-terminus, the 602-residue chain is DNA mismatch repair protein MutL (602 aa).

The protein belongs to the DNA mismatch repair MutL/HexB family.

In terms of biological role, this protein is involved in the repair of mismatches in DNA. It is required for dam-dependent methyl-directed DNA mismatch repair. May act as a 'molecular matchmaker', a protein that promotes the formation of a stable complex between two or more DNA-binding proteins in an ATP-dependent manner without itself being part of a final effector complex. The sequence is that of DNA mismatch repair protein MutL from Baumannia cicadellinicola subsp. Homalodisca coagulata.